A 263-amino-acid chain; its full sequence is Glutamate racemase (263 aa).

Substrate-binding positions include 10–11 and 42–43; these read DS and YG. The Proton donor/acceptor role is filled by Cys-73. Substrate is bound at residue 74–75; that stretch reads NS. Catalysis depends on Cys-183, which acts as the Proton donor/acceptor. 184–185 serves as a coordination point for substrate; that stretch reads TH.

The protein belongs to the aspartate/glutamate racemases family.

The enzyme catalyses L-glutamate = D-glutamate. It participates in cell wall biogenesis; peptidoglycan biosynthesis. Functionally, provides the (R)-glutamate required for cell wall biosynthesis. This is Glutamate racemase from Acidothermus cellulolyticus (strain ATCC 43068 / DSM 8971 / 11B).